Here is a 160-residue protein sequence, read N- to C-terminus: Protein MGF 300-2R (160 aa).

This sequence belongs to the asfivirus MGF 300 family.

In terms of biological role, plays a role in virus cell tropism, and may be required for efficient virus replication in macrophages. The polypeptide is Protein MGF 300-2R (African swine fever virus (isolate Pig/Kenya/KEN-50/1950) (ASFV)).